Here is a 308-residue protein sequence, read N- to C-terminus: Aspartate carbamoyltransferase catalytic subunit (308 aa).

2 residues coordinate carbamoyl phosphate: R49 and T50. Residue K77 coordinates L-aspartate. Residues R99, H127, and Q130 each coordinate carbamoyl phosphate. Positions 160 and 211 each coordinate L-aspartate. The carbamoyl phosphate site is built by A252 and P253.

The protein belongs to the aspartate/ornithine carbamoyltransferase superfamily. ATCase family. In terms of assembly, heterododecamer (2C3:3R2) of six catalytic PyrB chains organized as two trimers (C3), and six regulatory PyrI chains organized as three dimers (R2).

It catalyses the reaction carbamoyl phosphate + L-aspartate = N-carbamoyl-L-aspartate + phosphate + H(+). Its pathway is pyrimidine metabolism; UMP biosynthesis via de novo pathway; (S)-dihydroorotate from bicarbonate: step 2/3. Catalyzes the condensation of carbamoyl phosphate and aspartate to form carbamoyl aspartate and inorganic phosphate, the committed step in the de novo pyrimidine nucleotide biosynthesis pathway. This chain is Aspartate carbamoyltransferase catalytic subunit, found in Geobacillus kaustophilus (strain HTA426).